Here is a 315-residue protein sequence, read N- to C-terminus: B3 domain-containing protein At1g05920 (315 aa).

The disordered stretch occupies residues 24–129 (MISRDNQKKT…PQVASVPKSV (106 aa)). Composition is skewed to basic and acidic residues over residues 39–51 (VREEKGKRREEMI), 66–83 (KEGKGKRREEMISRDNRT), and 100–114 (FDHVPRGTREPHAYL). The TF-B3 DNA-binding region spans 204 to 306 (INTVIQNDFL…ILCFALVPPT (103 aa)).

The protein resides in the nucleus. The chain is B3 domain-containing protein At1g05920 from Arabidopsis thaliana (Mouse-ear cress).